Consider the following 102-residue polypeptide: Small ribosomal subunit protein uS10 (102 aa).

The protein belongs to the universal ribosomal protein uS10 family. Part of the 30S ribosomal subunit.

Functionally, involved in the binding of tRNA to the ribosomes. The protein is Small ribosomal subunit protein uS10 of Cenarchaeum symbiosum (strain A).